A 196-amino-acid polypeptide reads, in one-letter code: Pyridoxal 5'-phosphate synthase subunit PdxT (196 aa).

An L-glutamine-binding site is contributed by 47–49 (GES). Cysteine 79 functions as the Nucleophile in the catalytic mechanism. L-glutamine-binding positions include arginine 106 and 134-135 (IR). Residues histidine 170 and glutamate 172 each act as charge relay system in the active site.

The protein belongs to the glutaminase PdxT/SNO family. As to quaternary structure, in the presence of PdxS, forms a dodecamer of heterodimers. Only shows activity in the heterodimer.

The enzyme catalyses aldehydo-D-ribose 5-phosphate + D-glyceraldehyde 3-phosphate + L-glutamine = pyridoxal 5'-phosphate + L-glutamate + phosphate + 3 H2O + H(+). The catalysed reaction is L-glutamine + H2O = L-glutamate + NH4(+). It functions in the pathway cofactor biosynthesis; pyridoxal 5'-phosphate biosynthesis. Catalyzes the hydrolysis of glutamine to glutamate and ammonia as part of the biosynthesis of pyridoxal 5'-phosphate. The resulting ammonia molecule is channeled to the active site of PdxS. The sequence is that of Pyridoxal 5'-phosphate synthase subunit PdxT from Bacillus cereus (strain ZK / E33L).